The sequence spans 389 residues: MASLYLNSLLPLPPSHPQKLLEPSSSSLLSTSNGNELALKPIVINGDPPTFVSAPARRIVAVGDLHGDLGKARDALQLAGVLSSDGRDQWVGQDTVLVQVGDILDRGDDEIAILSLLRSLDDQAKANGGAVFQVNGNHETMNVEGDFRYVDARAFDECTDFLDYLEDYAQDWDKAFRNWIFESRQWKEDRRSSQTYWDQWNVVKRQKGVIARSVLLRPGGRLACELSRHGVILRVNNWLFCHGGLLPHHVAYGIERINREVSTWMRSPTNYEDSPQMPFIATRGYDSVVWSRLYSRETSELEDYQIEQVNKILHDTLEAVGAKAMVVGHTPQLSGVNCEYGCGIWRVDVGMSSGVLDSRPEVLEIRGDKARVIRSNRDRLHELQVADYI.

The transit peptide at 1-53 (MASLYLNSLLPLPPSHPQKLLEPSSSSLLSTSNGNELALKPIVINGDPPTFVS) directs the protein to the chloroplast. The Mn(2+) site is built by Asp-64, His-66, Asp-102, and Asn-137. His-138 functions as the Proton donor in the catalytic mechanism. Mn(2+) is bound by residues His-242 and His-314.

It belongs to the metallophosphoesterase superfamily. SLP family. The cofactor is Mn(2+). As to expression, expressed in rosettes leaves, shoots and flowers (at protein level).

It is found in the plastid. It localises to the chloroplast. Functionally, shows phosphatase activity, hydrolyzing the artificial substrate para-nitrophenylphosphate (pNPP) in vitro. This chain is Shewanella-like protein phosphatase 1, found in Arabidopsis thaliana (Mouse-ear cress).